We begin with the raw amino-acid sequence, 65 residues long: MPKMKSHSGAKKRFKKTGNGKIKRKKANKGHLLTKKNAKRKRQLRKSVVVDDKANRDRIKRMLST.

Residues 1–45 (MPKMKSHSGAKKRFKKTGNGKIKRKKANKGHLLTKKNAKRKRQLR) are compositionally biased toward basic residues. A disordered region spans residues 1–65 (MPKMKSHSGA…RDRIKRMLST (65 aa)). The segment covering 48–57 (VVVDDKANRD) has biased composition (basic and acidic residues).

It belongs to the bacterial ribosomal protein bL35 family.

This is Large ribosomal subunit protein bL35 from Salinibacter ruber (strain DSM 13855 / M31).